Reading from the N-terminus, the 256-residue chain is Phosphatidylglycerol--prolipoprotein diacylglyceryl transferase (256 aa).

Transmembrane regions (helical) follow at residues 19 to 39 (VHWY…LGYW), 56 to 76 (LIFY…MLFY), and 91 to 111 (IWEG…AAWL). Arg-139 is an a 1,2-diacyl-sn-glycero-3-phospho-(1'-sn-glycerol) binding site. The helical transmembrane segment at 231–251 (FGWLTMGQVLSIPMLLIGIWL) threads the bilayer.

Belongs to the Lgt family.

It localises to the cell inner membrane. It catalyses the reaction L-cysteinyl-[prolipoprotein] + a 1,2-diacyl-sn-glycero-3-phospho-(1'-sn-glycerol) = an S-1,2-diacyl-sn-glyceryl-L-cysteinyl-[prolipoprotein] + sn-glycerol 1-phosphate + H(+). It functions in the pathway protein modification; lipoprotein biosynthesis (diacylglyceryl transfer). Catalyzes the transfer of the diacylglyceryl group from phosphatidylglycerol to the sulfhydryl group of the N-terminal cysteine of a prolipoprotein, the first step in the formation of mature lipoproteins. The polypeptide is Phosphatidylglycerol--prolipoprotein diacylglyceryl transferase (Legionella pneumophila (strain Lens)).